The following is a 325-amino-acid chain: All-trans-nonaprenyl-diphosphate synthase (geranyl-diphosphate specific) (325 aa).

Isopentenyl diphosphate contacts are provided by K48, R51, and H81. Positions 88 and 92 each coordinate Mg(2+). An all-trans-polyprenyl diphosphate is bound at residue R97. Residue R98 coordinates isopentenyl diphosphate. Residues K174, T175, Q211, and K228 each coordinate an all-trans-polyprenyl diphosphate.

Belongs to the FPP/GGPP synthase family. As to quaternary structure, homodimer. It depends on Mg(2+) as a cofactor.

It carries out the reaction 7 isopentenyl diphosphate + (2E)-geranyl diphosphate = all-trans-nonaprenyl diphosphate + 7 diphosphate. Functionally, catalyzes the sequential condensation of isopentenyl diphosphate (IPP) with the allylic substrate to give solanesyl diphosphate. Could be important to determine the side chain length of ubiquinone. The sequence is that of All-trans-nonaprenyl-diphosphate synthase (geranyl-diphosphate specific) (sdsA) from Rhodobacter capsulatus (Rhodopseudomonas capsulata).